A 62-amino-acid chain; its full sequence is Photosystem II reaction center protein Z (62 aa).

2 consecutive transmembrane segments (helical) span residues 8 to 28 (AVFA…VVLA) and 41 to 61 (FSGA…NSLI).

It belongs to the PsbZ family. As to quaternary structure, PSII is composed of 1 copy each of membrane proteins PsbA, PsbB, PsbC, PsbD, PsbE, PsbF, PsbH, PsbI, PsbJ, PsbK, PsbL, PsbM, PsbT, PsbY, PsbZ, Psb30/Ycf12, at least 3 peripheral proteins of the oxygen-evolving complex and a large number of cofactors. It forms dimeric complexes.

Its subcellular location is the plastid. The protein resides in the chloroplast thylakoid membrane. In terms of biological role, may control the interaction of photosystem II (PSII) cores with the light-harvesting antenna, regulates electron flow through the 2 photosystem reaction centers. PSII is a light-driven water plastoquinone oxidoreductase, using light energy to abstract electrons from H(2)O, generating a proton gradient subsequently used for ATP formation. This chain is Photosystem II reaction center protein Z, found in Huperzia lucidula (Shining clubmoss).